The following is a 616-amino-acid chain: Protein NRT1/ PTR FAMILY 2.11 (616 aa).

The tract at residues 1-22 (MERKPLELESTDNHQNPSSAVY) is disordered. 12 helical membrane-spanning segments follow: residues 59–79 (FEKLGIIGTLSNLLVYLTAVF), 87–107 (ATIINAFSGTINFGTFVAAFL), 118–138 (LSVAVIACFLGSFVILLTAAV), 159–179 (GGQIAFLLMGLGFLVVGAGGI), 205–225 (FFNWYFFTFTFAQILSLTLVV), 233–253 (WTIGLTIPAVLMFLACLIFFA), 349–369 (VKCIVRVLPIWFASSIYYLTI), 392–412 (FVIPAATYVVFLMTGMTVFIV), 435–455 (LQRIGTGIFFATASLVVAGFV), 483–503 (AMWLIPQLSLAGVAEAFAAIG), 519–539 (FAGSIFYVGGGVSSYLGSFLI), and 566–586 (LFYFMIAGILAVNFAYFLVMS).

This sequence belongs to the major facilitator superfamily. Proton-dependent oligopeptide transporter (POT/PTR) (TC 2.A.17) family. As to expression, expressed in roots. Detected in shoots, stems and flowers. Expressed in veins and in the root vasculature with highest expression in lateral branching points.

It localises to the cell membrane. Its function is as follows. High-affinity, proton-dependent glucosinolate-specific transporter. Involved in apoplasmic phloem-loading of glucosinolates and in bidirectional long-distance transport of aliphatic but not indole glucosinolates. May be involved in removal of glucosinolates from the xylem in roots. This is Protein NRT1/ PTR FAMILY 2.11 (NPF2.11) from Arabidopsis thaliana (Mouse-ear cress).